Here is a 240-residue protein sequence, read N- to C-terminus: Probable transcriptional regulatory protein MXAN_7062 (240 aa).

Belongs to the TACO1 family.

Its subcellular location is the cytoplasm. In Myxococcus xanthus (strain DK1622), this protein is Probable transcriptional regulatory protein MXAN_7062.